The chain runs to 278 residues: MCRRPDCGFSFSPGPVILLWCCLLLPIVSSAAVSVAPTAAEKVPAECPELTRRCLLGEVFQGDKYESWLRPLVNVTGRDGPLSQLIRYRPVTPEAANSVLLDEAFLDTLALLYNNPDQLRALLTLLSSDTAPRWMTVMRGYSECGDGSPAVYTCVDDLCRGYDLTRLSYGRSIFTEHVLGFELVPPSLFNVVVAIRNEATRTNRAVRLPVSTAAAPEGITLFYGLYNAVKEFCLRHQLDPPLLRHLDKYYAGLPPELKQTRVNLPAHSRYGPQAVDAR.

An N-terminal signal peptide occupies residues 1 to 30 (MCRRPDCGFSFSPGPVILLWCCLLLPIVSS). Residues 43-256 (VPAECPELTR…DKYYAGLPPE (214 aa)) form the gL betaherpesvirus-type domain. Cysteines 154 and 159 form a disulfide.

Belongs to the herpesviridae glycoprotein L (gL) family. Betaherpesvirinae gL subfamily. As to quaternary structure, interacts with glycoprotein H (gH); this interaction is necessary for the correct processing and cell surface expression of gH. Forms the envelope pentamer complex (PC) composed of gH, gL, UL128, UL130, and UL131A. The pentamer interacts with host NRP2. Forms the envelope trimer complex composed of gH, gL, and gO. The trimer interacts with host PDGFRA. The trimer also interacts with host EPHA2.

Its subcellular location is the virion membrane. It is found in the host cell membrane. The protein localises to the host Golgi apparatus. The protein resides in the host trans-Golgi network. In terms of biological role, the heterodimer glycoprotein H-glycoprotein L is required for the fusion of viral and plasma membranes leading to virus entry into the host cell. Acts as a functional inhibitor of gH and maintains gH in an inhibited form. Upon binding to host integrins, gL dissociates from gH leading to activation of the viral fusion glycoproteins gB and gH. In human cytomegalovirus, forms two distincts complexes to mediate viral entry, a trimer and a pentamer at the surface of the virion envelope. The gH-gL-gO trimer is required for infection in fibroblasts by interacting with host PDGFRA, and in glioblastoma cells by interacting with host EPHA2. The gH-gL-UL128-UL130-UL131A pentamer is essential for viral entry in epithelial, endothelial and myeloid cells via interaction with host NRP2. This chain is Envelope glycoprotein L, found in Human cytomegalovirus (strain 5035) (HHV-5).